The primary structure comprises 181 residues: Acetylcholinesterase (181 aa).

The active-site Acyl-ester intermediate is the Ser76. The Charge relay system role is filled by Glu132. The tract at residues 162–181 (WQDQDNGGLPLTGNPTXPHN) is disordered.

It belongs to the type-B carboxylesterase/lipase family. Post-translationally, the N-terminus is blocked. As to expression, expressed by the venom gland. Is also probably expressed by liver and muscle.

Its subcellular location is the synapse. The protein localises to the secreted. The protein resides in the cell membrane. It catalyses the reaction acetylcholine + H2O = choline + acetate + H(+). Its function is as follows. In venom, its toxic role is unclear: it could result in less musculatory control by rapidly hydrolyzing acetylcholine, or that it works synergistically with alkaline phosphatase (ALP) in paralyzing prey through hypotension. In muscle, it terminates signal transduction at the neuromuscular junction by rapid hydrolysis of the acetylcholine released into the synaptic cleft. In liver, its function is unclear: it could serve as a safeguard against any diffusion of acetylcholine from synapses into the circulation. The protein is Acetylcholinesterase (ACHE) of Naja oxiana (Central Asian cobra).